The chain runs to 216 residues: Guanylate kinase (216 aa).

Residues 11–189 (GVLIVISGPS…AVKKIEAILL (179 aa)) form the Guanylate kinase-like domain. An ATP-binding site is contributed by 18–25 (GPSGAGKG).

The protein belongs to the guanylate kinase family.

Its subcellular location is the cytoplasm. It catalyses the reaction GMP + ATP = GDP + ADP. In terms of biological role, essential for recycling GMP and indirectly, cGMP. The polypeptide is Guanylate kinase (Clostridium perfringens (strain SM101 / Type A)).